A 497-amino-acid chain; its full sequence is Zinc finger CCCH domain-containing protein 22 (497 aa).

The C3H1-type zinc finger occupies 136–163; it reads SESMMICKFFMQQRCRFGSSCRSSHGLD. A disordered region spans residues 236-281; the sequence is AQMTDDDGEEEEEEDEQQSASDSEDSVSSDYDEGSPQGIGFLESTN. Positions 239-268 are enriched in acidic residues; that stretch reads TDDDGEEEEEEDEQQSASDSEDSVSSDYDE. In terms of domain architecture, G-patch spans 300-346; it reads TRGIASKMMASMGYREGMGLGVSGQGILNPILVKVLPAKRSLDYALE. The segment at 352–387 is disordered; sequence ECKSEKQKKKRSRGGKRKRGKKFAEAAKAAKQEEES. The span at 357–372 shows a compositional bias: basic residues; it reads KQKKKRSRGGKRKRGK. Positions 373–387 are enriched in basic and acidic residues; the sequence is KFAEAAKAAKQEEES.

In Arabidopsis thaliana (Mouse-ear cress), this protein is Zinc finger CCCH domain-containing protein 22.